The primary structure comprises 89 residues: Small ribosomal subunit protein uS15 (89 aa).

Belongs to the universal ribosomal protein uS15 family. In terms of assembly, part of the 30S ribosomal subunit. Forms a bridge to the 50S subunit in the 70S ribosome, contacting the 23S rRNA.

Functionally, one of the primary rRNA binding proteins, it binds directly to 16S rRNA where it helps nucleate assembly of the platform of the 30S subunit by binding and bridging several RNA helices of the 16S rRNA. Its function is as follows. Forms an intersubunit bridge (bridge B4) with the 23S rRNA of the 50S subunit in the ribosome. This Corynebacterium kroppenstedtii (strain DSM 44385 / JCM 11950 / CIP 105744 / CCUG 35717) protein is Small ribosomal subunit protein uS15.